A 461-amino-acid chain; its full sequence is MNATVPSAAPADLPAHRPATAVILAAGMGTRMKSDRPKVMHPLAGQPMLRYLLDNAASVFDRIVVVVGPGMEQVAALAAPHAVVVQQDRLGTAHAAAQAADLFGTGDVAVLYGDNPLITADSMRRMLACRAGEGNSEGAGLALMAMRPRDPGRYGRVVTQDGLVRRIVEWADASDEERAITLCNAGVLCAGAEDFRRWLGAVRNDNAQGEYYLGDVVAMAVAEGRQVRAVEAPEDELRGINSRAELAEAEACVQRRLRAAALDGGATLVAPETVFLAADTVLEPDVLVQPHVVFGPGVTVRRGAEIRAFSHLEGCVVGPGALIGPYARLRPGSDVGAAAHVGNFVELKATTLGAGAKANHLSYLGDATIGPATNIGAGTITCNYDGVFKHRTDIGAGCFVGSNAILVAPVSIGDGALVAAGSVITQDVLPDAMALGRARQTNKDGRGASLQAALRRKKEQG.

Residues 1–243 form a pyrophosphorylase region; that stretch reads MNATVPSAAP…EDELRGINSR (243 aa). UDP-N-acetyl-alpha-D-glucosamine contacts are provided by residues 24-27, lysine 38, glutamine 86, 91-92, 112-114, glycine 155, glutamate 169, asparagine 184, and asparagine 241; these read LAAG, GT, and YGD. Residue aspartate 114 coordinates Mg(2+). A Mg(2+)-binding site is contributed by asparagine 241. Positions 244-264 are linker; that stretch reads AELAEAEACVQRRLRAAALDG. The N-acetyltransferase stretch occupies residues 265–461; sequence GATLVAPETV…AALRRKKEQG (197 aa). 2 residues coordinate UDP-N-acetyl-alpha-D-glucosamine: arginine 330 and lysine 348. The Proton acceptor role is filled by histidine 360. The UDP-N-acetyl-alpha-D-glucosamine site is built by tyrosine 363 and asparagine 374. Acetyl-CoA-binding positions include alanine 377, 383 to 384, serine 402, alanine 420, and arginine 437; that span reads NY.

It in the N-terminal section; belongs to the N-acetylglucosamine-1-phosphate uridyltransferase family. In the C-terminal section; belongs to the transferase hexapeptide repeat family. Homotrimer. Requires Mg(2+) as cofactor.

It localises to the cytoplasm. It carries out the reaction alpha-D-glucosamine 1-phosphate + acetyl-CoA = N-acetyl-alpha-D-glucosamine 1-phosphate + CoA + H(+). It catalyses the reaction N-acetyl-alpha-D-glucosamine 1-phosphate + UTP + H(+) = UDP-N-acetyl-alpha-D-glucosamine + diphosphate. Its pathway is nucleotide-sugar biosynthesis; UDP-N-acetyl-alpha-D-glucosamine biosynthesis; N-acetyl-alpha-D-glucosamine 1-phosphate from alpha-D-glucosamine 6-phosphate (route II): step 2/2. It functions in the pathway nucleotide-sugar biosynthesis; UDP-N-acetyl-alpha-D-glucosamine biosynthesis; UDP-N-acetyl-alpha-D-glucosamine from N-acetyl-alpha-D-glucosamine 1-phosphate: step 1/1. It participates in bacterial outer membrane biogenesis; LPS lipid A biosynthesis. In terms of biological role, catalyzes the last two sequential reactions in the de novo biosynthetic pathway for UDP-N-acetylglucosamine (UDP-GlcNAc). The C-terminal domain catalyzes the transfer of acetyl group from acetyl coenzyme A to glucosamine-1-phosphate (GlcN-1-P) to produce N-acetylglucosamine-1-phosphate (GlcNAc-1-P), which is converted into UDP-GlcNAc by the transfer of uridine 5-monophosphate (from uridine 5-triphosphate), a reaction catalyzed by the N-terminal domain. The protein is Bifunctional protein GlmU of Gluconacetobacter diazotrophicus (strain ATCC 49037 / DSM 5601 / CCUG 37298 / CIP 103539 / LMG 7603 / PAl5).